Reading from the N-terminus, the 278-residue chain is NAD-capped RNA hydrolase NudC (278 aa).

Arginine 84 is a substrate binding site. Zn(2+) contacts are provided by cysteine 114 and cysteine 117. Substrate is bound at residue glutamate 127. 2 residues coordinate Zn(2+): cysteine 132 and cysteine 135. Residue tyrosine 140 participates in substrate binding. A Nudix hydrolase domain is found at 141 to 265 (PRLSPSMIVL…IARHLIDLYL (125 aa)). Alanine 174, glutamate 190, and glutamate 194 together coordinate a divalent metal cation. The Nudix box signature appears at 175 to 196 (GFVEAGESVEQCVVREVREEVG). 208 to 215 (QNWPFPHS) is a binding site for substrate. Residue glutamate 235 coordinates a divalent metal cation. Substrate is bound at residue alanine 257.

This sequence belongs to the Nudix hydrolase family. NudC subfamily. In terms of assembly, homodimer. It depends on Mg(2+) as a cofactor. Requires Mn(2+) as cofactor. The cofactor is Zn(2+).

It catalyses the reaction a 5'-end NAD(+)-phospho-ribonucleoside in mRNA + H2O = a 5'-end phospho-adenosine-phospho-ribonucleoside in mRNA + beta-nicotinamide D-ribonucleotide + 2 H(+). It carries out the reaction NAD(+) + H2O = beta-nicotinamide D-ribonucleotide + AMP + 2 H(+). The enzyme catalyses NADH + H2O = reduced beta-nicotinamide D-ribonucleotide + AMP + 2 H(+). In terms of biological role, mRNA decapping enzyme that specifically removes the nicotinamide adenine dinucleotide (NAD) cap from a subset of mRNAs by hydrolyzing the diphosphate linkage to produce nicotinamide mononucleotide (NMN) and 5' monophosphate mRNA. The NAD-cap is present at the 5'-end of some mRNAs and stabilizes RNA against 5'-processing. Has preference for mRNAs with a 5'-end purine. Catalyzes the hydrolysis of a broad range of dinucleotide pyrophosphates. This chain is NAD-capped RNA hydrolase NudC, found in Pseudomonas aeruginosa (strain ATCC 15692 / DSM 22644 / CIP 104116 / JCM 14847 / LMG 12228 / 1C / PRS 101 / PAO1).